The primary structure comprises 473 residues: Aspartyl/glutamyl-tRNA(Asn/Gln) amidotransferase subunit B (473 aa).

This sequence belongs to the GatB/GatE family. GatB subfamily. As to quaternary structure, heterotrimer of A, B and C subunits.

The enzyme catalyses L-glutamyl-tRNA(Gln) + L-glutamine + ATP + H2O = L-glutaminyl-tRNA(Gln) + L-glutamate + ADP + phosphate + H(+). It catalyses the reaction L-aspartyl-tRNA(Asn) + L-glutamine + ATP + H2O = L-asparaginyl-tRNA(Asn) + L-glutamate + ADP + phosphate + 2 H(+). Functionally, allows the formation of correctly charged Asn-tRNA(Asn) or Gln-tRNA(Gln) through the transamidation of misacylated Asp-tRNA(Asn) or Glu-tRNA(Gln) in organisms which lack either or both of asparaginyl-tRNA or glutaminyl-tRNA synthetases. The reaction takes place in the presence of glutamine and ATP through an activated phospho-Asp-tRNA(Asn) or phospho-Glu-tRNA(Gln). The protein is Aspartyl/glutamyl-tRNA(Asn/Gln) amidotransferase subunit B of Methanococcoides burtonii (strain DSM 6242 / NBRC 107633 / OCM 468 / ACE-M).